The following is a 237-amino-acid chain: MNIKDIGVIIAKKPLKENTFIITVFTKNHGLYSGVVKEFSKKSKFIYQEGNIIDFLWQARLHEHIGMAKCELIKSYTGYFITNKAKLYAFNSVISLIKELFHEREEHSKFFLFLINYLDNLSKNFCFRDYINFELALLAETGYKLDLTKCGVSHVTTDLIYVSPKSARALSYEVGKPYKDKLLMLPRFLLSDNSEITLEEKRQALALTNYFFNRYLFHNNRQVEARQTFIEYTLNNF.

The protein belongs to the RecO family.

In terms of biological role, involved in DNA repair and RecF pathway recombination. The polypeptide is DNA repair protein RecO (Rickettsia peacockii (strain Rustic)).